The chain runs to 475 residues: Nucleoporin-like protein amo1 (475 aa).

The C3H1-type zinc-finger motif lies at 1-25; that stretch reads MVVCKYFLQNRCRYGTNCKNQHTVP. The segment covering 165 to 182 has biased composition (polar residues); the sequence is DKSTSNSTVTSNQFNKPT. 2 disordered regions span residues 165 to 208 and 220 to 252; these read DKST…DIFG and NASP…SSFG. Over residues 183 to 204 the composition is skewed to low complexity; sequence QNSPFNSFSNNNNSFNNNQQAN. Positions 220 to 242 are enriched in polar residues; it reads NASPFSQNTSSNSFTGSNPVQNN. Over residues 243–252 the composition is skewed to low complexity; the sequence is PSSFGSSSFG.

It localises to the nucleus. In terms of biological role, involved in the cell polarity process where it is required for the correct termination of microtubule growth at the cell ends during interphase. This Schizosaccharomyces pombe (strain 972 / ATCC 24843) (Fission yeast) protein is Nucleoporin-like protein amo1 (amo1).